We begin with the raw amino-acid sequence, 337 residues long: Cholinesterase 2 (337 aa).

Residue Ser99 is the Acyl-ester intermediate of the active site. The cysteines at positions 153 and 165 are disulfide-linked. The active-site Charge relay system is Glu224. Residue Asn290 is glycosylated (N-linked (GlcNAc...) asparagine).

Belongs to the type-B carboxylesterase/lipase family.

It catalyses the reaction an acylcholine + H2O = a carboxylate + choline + H(+). The sequence is that of Cholinesterase 2 (CHE2) from Branchiostoma lanceolatum (Common lancelet).